A 388-amino-acid polypeptide reads, in one-letter code: AT-rich binding protein (388 aa).

Residues Ile29–His52 form a C2H2-type 1 zinc finger. 2 stretches are compositionally biased toward low complexity: residues Gln138 to Gln165 and Val249 to Pro265. 2 disordered regions span residues Gln138–Val168 and Pro240–Pro265. 2 C2H2-type zinc fingers span residues Tyr321–His345 and Phe351–His374.

The protein resides in the nucleus. Functionally, may be a transcription factor for genes having (A+T) stretches in their promoter and/or enhancer regions. Binds to AT rich DNA. This Drosophila melanogaster (Fruit fly) protein is AT-rich binding protein.